The sequence spans 219 residues: Protein DMP5 (219 aa).

A disordered region spans residues 1 to 24; the sequence is MSALRLRNANTPAPELDELSDQTP. Helical transmembrane passes span 51 to 71, 82 to 102, 142 to 162, and 182 to 202; these read LSNL…PVFT, FLTA…SFTD, MRFV…AVAL, and VLDI…MVFP.

This sequence belongs to the plant DMP1 protein family.

It localises to the endoplasmic reticulum membrane. Functionally, involved in membrane remodeling. The chain is Protein DMP5 from Arabidopsis thaliana (Mouse-ear cress).